The chain runs to 647 residues: Exoribonuclease 2 (647 aa).

One can recognise an RNB domain in the interval 192 to 519; that stretch reads RIDLTSLDFV…NHRLLKAIIQ (328 aa). An S1 motif domain is found at 564–646; that stretch reads EQRFTAEIID…ETRNIVARPT (83 aa).

Belongs to the RNR ribonuclease family. RNase II subfamily.

It is found in the cytoplasm. It catalyses the reaction Exonucleolytic cleavage in the 3'- to 5'-direction to yield nucleoside 5'-phosphates.. Functionally, involved in mRNA degradation. Hydrolyzes single-stranded polyribonucleotides processively in the 3' to 5' direction. This chain is Exoribonuclease 2, found in Photorhabdus laumondii subsp. laumondii (strain DSM 15139 / CIP 105565 / TT01) (Photorhabdus luminescens subsp. laumondii).